Reading from the N-terminus, the 313-residue chain is Methylenetetrahydrofolate dehydrogenase [NAD(+)] (313 aa).

The active site involves C152. Residues 187–188 (RS), 210–211 (DI), and 270–272 (FAG) contribute to the NAD(+) site.

It belongs to the tetrahydrofolate dehydrogenase/cyclohydrolase family. Homodimer.

It carries out the reaction (6R)-5,10-methylene-5,6,7,8-tetrahydrofolate + NAD(+) = (6R)-5,10-methenyltetrahydrofolate + NADH. It functions in the pathway one-carbon metabolism; tetrahydrofolate interconversion. In terms of biological role, catalyzes oxidation of cytoplasmic one-carbon units for purine biosynthesis. This is Methylenetetrahydrofolate dehydrogenase [NAD(+)] (thfA) from Dictyostelium discoideum (Social amoeba).